Reading from the N-terminus, the 949-residue chain is Glycine dehydrogenase (decarboxylating) (949 aa).

The residue at position 700 (K700) is an N6-(pyridoxal phosphate)lysine.

This sequence belongs to the GcvP family. The glycine cleavage system is composed of four proteins: P, T, L and H. Requires pyridoxal 5'-phosphate as cofactor.

It carries out the reaction N(6)-[(R)-lipoyl]-L-lysyl-[glycine-cleavage complex H protein] + glycine + H(+) = N(6)-[(R)-S(8)-aminomethyldihydrolipoyl]-L-lysyl-[glycine-cleavage complex H protein] + CO2. Its function is as follows. The glycine cleavage system catalyzes the degradation of glycine. The P protein binds the alpha-amino group of glycine through its pyridoxal phosphate cofactor; CO(2) is released and the remaining methylamine moiety is then transferred to the lipoamide cofactor of the H protein. This is Glycine dehydrogenase (decarboxylating) from Christiangramia forsetii (strain DSM 17595 / CGMCC 1.15422 / KT0803) (Gramella forsetii).